We begin with the raw amino-acid sequence, 185 residues long: Lysozyme g (185 aa).

The active site involves E73.

The protein belongs to the glycosyl hydrolase 23 family.

It catalyses the reaction Hydrolysis of (1-&gt;4)-beta-linkages between N-acetylmuramic acid and N-acetyl-D-glucosamine residues in a peptidoglycan and between N-acetyl-D-glucosamine residues in chitodextrins.. In Cyprinus carpio (Common carp), this protein is Lysozyme g.